A 126-amino-acid polypeptide reads, in one-letter code: Small ribosomal subunit protein uS12 (126 aa).

Asp89 is subject to 3-methylthioaspartic acid. Residues 106–126 (GVRERRRSRSKYGAKMPRSAA) are disordered.

The protein belongs to the universal ribosomal protein uS12 family. Part of the 30S ribosomal subunit. Contacts proteins S8 and S17. May interact with IF1 in the 30S initiation complex.

Functionally, with S4 and S5 plays an important role in translational accuracy. In terms of biological role, interacts with and stabilizes bases of the 16S rRNA that are involved in tRNA selection in the A site and with the mRNA backbone. Located at the interface of the 30S and 50S subunits, it traverses the body of the 30S subunit contacting proteins on the other side and probably holding the rRNA structure together. The combined cluster of proteins S8, S12 and S17 appears to hold together the shoulder and platform of the 30S subunit. This is Small ribosomal subunit protein uS12 from Tremblaya princeps.